The chain runs to 184 residues: Photosystem I assembly protein Ycf4 (184 aa).

A run of 2 helical transmembrane segments spans residues 19–39 (ISNF…LLVG) and 57–77 (IVFF…LFIS).

Belongs to the Ycf4 family.

The protein localises to the plastid. The protein resides in the chloroplast thylakoid membrane. In terms of biological role, seems to be required for the assembly of the photosystem I complex. This Nicotiana tomentosiformis (Tobacco) protein is Photosystem I assembly protein Ycf4.